We begin with the raw amino-acid sequence, 163 residues long: EF-hand calcium-binding domain-containing protein 11 (163 aa).

3 EF-hand domains span residues 18–53 (SEHR…LFGY), 91–126 (RYRN…VAPK), and 127–162 (LPER…GQKE). 5 residues coordinate Ca(2+): Asp140, Asp142, Asp144, His146, and Asp151.

The protein is EF-hand calcium-binding domain-containing protein 11 (EFCAB11) of Homo sapiens (Human).